A 1209-amino-acid chain; its full sequence is Limbin (1209 aa).

Residues 1–200 lie on the Extracellular side of the membrane; it reads MKFSKEIEVF…VLPNHGLHAA (200 aa). N-linked (GlcNAc...) asparagine glycosylation is present at asparagine 120. Residues 201 to 221 form a helical membrane-spanning segment; it reads GFCVAFILSLVLTWAVLFFMV. Over 222 to 1209 the chain is Cytoplasmic; it reads RYQCVKGSSL…KKAAWALGLN (988 aa). Coiled coils occupy residues 355-394, 553-697, and 920-1012; these read TAECDLETRKKTESQYQREMAAMEEAEEVLKRVSERSAVE, KQKL…EERD, and ELQE…METD. Over residues 689 to 700 the composition is skewed to basic and acidic residues; the sequence is ERLEGEERDRGQ. Positions 689–714 are disordered; the sequence is ERLEGEERDRGQEGVQSVRQRLKDDA.

Component of the EvC complex composed of EFCAB7, IQCE, EVC2 and EVC; built from two subcomplexes, EVC2:EVC and EFCAB7:IQCE. Interacts with EVC. Interacts (via N-terminal end) with EFCAB7. Interacts (via N-terminal end) with IQCE.

The protein localises to the cell membrane. The protein resides in the cytoplasm. It localises to the cytoskeleton. Its subcellular location is the cilium basal body. It is found in the cell projection. The protein localises to the cilium. The protein resides in the cilium membrane. It localises to the nucleus. Component of the EvC complex that positively regulates ciliary Hedgehog (Hh) signaling. Plays a critical role in bone formation and skeletal development. May be involved in early embryonic morphogenesis. The protein is Limbin (EVC2) of Bos taurus (Bovine).